Here is a 258-residue protein sequence, read N- to C-terminus: UPF0246 protein YaaA (258 aa).

It belongs to the UPF0246 family.

The protein is UPF0246 protein YaaA of Escherichia coli O157:H7.